Reading from the N-terminus, the 316-residue chain is Ribosomal protein L11 methyltransferase (316 aa).

4 residues coordinate S-adenosyl-L-methionine: Thr-157, Gly-178, Asp-200, and Asn-243.

Belongs to the methyltransferase superfamily. PrmA family.

The protein resides in the cytoplasm. The catalysed reaction is L-lysyl-[protein] + 3 S-adenosyl-L-methionine = N(6),N(6),N(6)-trimethyl-L-lysyl-[protein] + 3 S-adenosyl-L-homocysteine + 3 H(+). In terms of biological role, methylates ribosomal protein L11. The chain is Ribosomal protein L11 methyltransferase from Streptococcus pneumoniae serotype 2 (strain D39 / NCTC 7466).